The sequence spans 190 residues: Elongation factor P 2 (190 aa).

This sequence belongs to the elongation factor P family.

Its subcellular location is the cytoplasm. Its pathway is protein biosynthesis; polypeptide chain elongation. In terms of biological role, involved in peptide bond synthesis. Stimulates efficient translation and peptide-bond synthesis on native or reconstituted 70S ribosomes in vitro. Probably functions indirectly by altering the affinity of the ribosome for aminoacyl-tRNA, thus increasing their reactivity as acceptors for peptidyl transferase. This is Elongation factor P 2 (efp2) from Protochlamydia amoebophila (strain UWE25).